The following is a 221-amino-acid chain: Urease accessory protein UreE (221 aa).

The tract at residues 160–194 (VPGTNKTTGDLAEEEQETERHEPHAHAIGEHHHEK) is disordered. Residues 177-194 (TERHEPHAHAIGEHHHEK) show a composition bias toward basic and acidic residues.

This sequence belongs to the UreE family.

It is found in the cytoplasm. Involved in urease metallocenter assembly. Binds nickel. Probably functions as a nickel donor during metallocenter assembly. In Bifidobacterium longum subsp. infantis (strain ATCC 15697 / DSM 20088 / JCM 1222 / NCTC 11817 / S12), this protein is Urease accessory protein UreE.